The sequence spans 385 residues: MSKRDFYDVLGVSRNASADELKKAYRSLAKKYHPDQNQGDKEAEQRFKELNEAYDALKDEQSRAAYDQFGHAAFDGGMGARGGPGGMGGFGAGASMSDIFDDLFGEFMGGRGGRGGRRGDGGQTRGHDLRYNMEISLEEAFEGKKAQVRVPGSVACEVCTGTGAAPGSSPITCPTCQGHGKVRASQGFFTIERTCPTCHGRGQTIDKPCTNCHGAGRVEKERTLSVNIPAGVEDGTRIRLSGEGEAGMRGGPAGDLYIFLSVKPHRLFERDGADLFCRVPIAMVTATLGGEIEVPTLGGKKVKVKVPEGAQTGRQFRLRGKGMPVVNSRETGDLYIQITVETPVNLTKKQKELLKEFEQASTPGNNPESAGFFAKVKEFWDGFQN.

The J domain occupies 5–70 (DFYDVLGVSR…QSRAAYDQFG (66 aa)). Residues 143–221 (GKKAQVRVPG…CHGAGRVEKE (79 aa)) form a CR-type zinc finger. The Zn(2+) site is built by cysteine 156, cysteine 159, cysteine 173, cysteine 176, cysteine 195, cysteine 198, cysteine 209, and cysteine 212. CXXCXGXG motif repeat units follow at residues 156–163 (CEVCTGTG), 173–180 (CPTCQGHG), 195–202 (CPTCHGRG), and 209–216 (CTNCHGAG).

This sequence belongs to the DnaJ family. As to quaternary structure, homodimer. It depends on Zn(2+) as a cofactor.

It localises to the cytoplasm. Participates actively in the response to hyperosmotic and heat shock by preventing the aggregation of stress-denatured proteins and by disaggregating proteins, also in an autonomous, DnaK-independent fashion. Unfolded proteins bind initially to DnaJ; upon interaction with the DnaJ-bound protein, DnaK hydrolyzes its bound ATP, resulting in the formation of a stable complex. GrpE releases ADP from DnaK; ATP binding to DnaK triggers the release of the substrate protein, thus completing the reaction cycle. Several rounds of ATP-dependent interactions between DnaJ, DnaK and GrpE are required for fully efficient folding. Also involved, together with DnaK and GrpE, in the DNA replication of plasmids through activation of initiation proteins. The polypeptide is Chaperone protein DnaJ (Parvibaculum lavamentivorans (strain DS-1 / DSM 13023 / NCIMB 13966)).